We begin with the raw amino-acid sequence, 366 residues long: Ribosomal RNA large subunit methyltransferase M (366 aa).

S-adenosyl-L-methionine-binding positions include S188, 221-224, D240, D260, and D277; that span reads CPGG. K306 (proton acceptor) is an active-site residue.

This sequence belongs to the class I-like SAM-binding methyltransferase superfamily. RNA methyltransferase RlmE family. RlmM subfamily. Monomer.

The protein resides in the cytoplasm. The enzyme catalyses cytidine(2498) in 23S rRNA + S-adenosyl-L-methionine = 2'-O-methylcytidine(2498) in 23S rRNA + S-adenosyl-L-homocysteine + H(+). Its function is as follows. Catalyzes the 2'-O-methylation at nucleotide C2498 in 23S rRNA. This chain is Ribosomal RNA large subunit methyltransferase M, found in Sodalis glossinidius (strain morsitans).